A 77-amino-acid polypeptide reads, in one-letter code: U8-lycotoxin-Ls1h (77 aa).

The signal sequence occupies residues Met-1–Val-20. Residues Gln-21 to Arg-26 constitute a propeptide that is removed on maturation.

Belongs to the neurotoxin 19 (CSTX) family. 08 (U8-Lctx) subfamily. Contains 4 disulfide bonds. As to expression, expressed by the venom gland.

The protein localises to the secreted. This Lycosa singoriensis (Wolf spider) protein is U8-lycotoxin-Ls1h.